The primary structure comprises 663 residues: Endopolyphosphatase (663 aa).

Topologically, residues 1–14 (MAVNEKDVGRKSRV) are cytoplasmic. The chain crosses the membrane as a helical; Signal-anchor for type II membrane protein span at residues 15–35 (SVVLWVFIALGTLFLCKNAFT). Residues 36–663 (FSSESIHGLK…ISTGYEDERN (628 aa)) are Vacuolar-facing. N-linked (GlcNAc...) asparagine glycans are attached at residues N487 and N526. Residues 534 to 564 (SAEQNKKKKKKNGKPDKSIPRKKPDELPAGP) are disordered. Residues 546 to 559 (GKPDKSIPRKKPDE) show a composition bias toward basic and acidic residues.

The protein belongs to the endopolyphosphatase PPN1 family. It depends on a divalent metal cation as a cofactor. In terms of processing, processing by proteases in the vacuole may be required for activation.

It localises to the vacuole membrane. It catalyses the reaction [phosphate](n+1) + n H2O = (n+1) phosphate + n H(+). Functionally, catalyzes the hydrolysis of inorganic polyphosphate (polyP) chains of many hundreds of phosphate residues into shorter lengths. The sequence is that of Endopolyphosphatase (PPN1) from Candida glabrata (strain ATCC 2001 / BCRC 20586 / JCM 3761 / NBRC 0622 / NRRL Y-65 / CBS 138) (Yeast).